A 933-amino-acid polypeptide reads, in one-letter code: Envelope glycoprotein B (933 aa).

A signal peptide spans methionine 1 to alanine 36. Positions alanine 36–proline 49 are enriched in low complexity. Residues alanine 36–arginine 115 form a disordered region. Residues alanine 37 to proline 797 are Virion surface-facing. A compositionally biased stretch (acidic residues) spans alanine 54–aspartate 69. Residues asparagine 107 and asparagine 161 are each glycosylated (N-linked (GlcNAc...) asparagine; by host). 5 cysteine pairs are disulfide-bonded: cysteine 136–cysteine 596, cysteine 153–cysteine 552, cysteine 227–cysteine 291, cysteine 384–cysteine 432, and cysteine 619–cysteine 656. 2 involved in fusion and/or binding to host membrane regions span residues threonine 193–tyrosine 199 and alanine 278–threonine 285. N-linked (GlcNAc...) asparagine; by host glycans are attached at residues asparagine 418 and asparagine 450. Asparagine 697 and asparagine 747 each carry an N-linked (GlcNAc...) asparagine; by host glycan. 2 hydrophobic membrane proximal region regions span residues isoleucine 742–serine 795 and leucine 754–serine 795. The chain crosses the membrane as a helical span at residues phenylalanine 798–methionine 818. Residues arginine 819–proline 933 are Intravirion-facing. Positions tyrosine 881–leucine 884 match the Golgi targeting motif. An Internalization motif motif is present at residues tyrosine 920–leucine 923.

This sequence belongs to the herpesviridae glycoprotein B family. In terms of assembly, homotrimer; disulfide-linked. Binds to heparan sulfate proteoglycans. Interacts with gH/gL heterodimer.

The protein localises to the virion membrane. The protein resides in the host cell membrane. It is found in the host endosome membrane. It localises to the host Golgi apparatus membrane. In terms of biological role, envelope glycoprotein that forms spikes at the surface of virion envelope. Essential for the initial attachment to heparan sulfate moieties of the host cell surface proteoglycans. Involved in fusion of viral and cellular membranes leading to virus entry into the host cell. Following initial binding to its host receptors, membrane fusion is mediated by the fusion machinery composed at least of gB and the heterodimer gH/gL. May be involved in the fusion between the virion envelope and the outer nuclear membrane during virion egress. This Herpesvirus ateles type 1 (strain Lennette) protein is Envelope glycoprotein B.